We begin with the raw amino-acid sequence, 380 residues long: MANLRKTHPLLKIANDALVDLPAPSNISVWWNFGSLLGLCLATQILTGLFLAMHYTSDISTAFSSVCHICRDVSYGWLIRNIHANGASFFFICIYMHIARGLYYGSYLYKETWNIGVVLLLLTMMTAFVGYVLPWGQMSFWGATVITNLLSAVPYVGGALVQWIWGGFSVDNATLTRFFAFHFLFPFVIAAATVLHLLFLHETGSNNPAGINSDADKISFHPYFSYKDLLGFVAMLLGLTSLALFAPNLLGDPDNFTPANPLVTPPHIKPEWYFLFAYAILRSIPNKLGGVLALLFSILVLMVVPILHTSKQRGLTFRPLTQFLFWALVADMLILTWIGGMPVEHPFIIIGQIASVIYFTIFLVLSPLAGWAENKALQWA.

4 helical membrane-spanning segments follow: residues F33–M53, W77–I98, W113–L133, and F178–L198. Heme b-binding residues include H83 and H97. H182 and H196 together coordinate heme b. Position 201 (H201) interacts with a ubiquinone. 4 consecutive transmembrane segments (helical) span residues Y226–A246, L288–H308, L320–G340, and F347–P367.

It belongs to the cytochrome b family. As to quaternary structure, the cytochrome bc1 complex contains 3 respiratory subunits (MT-CYB, CYC1 and UQCRFS1), 2 core proteins (UQCRC1 and UQCRC2) and probably 6 low-molecular weight proteins. Heme b serves as cofactor.

The protein localises to the mitochondrion inner membrane. Component of the ubiquinol-cytochrome c reductase complex (complex III or cytochrome b-c1 complex) that is part of the mitochondrial respiratory chain. The b-c1 complex mediates electron transfer from ubiquinol to cytochrome c. Contributes to the generation of a proton gradient across the mitochondrial membrane that is then used for ATP synthesis. The sequence is that of Cytochrome b (mt-cyb) from Oncorhynchus keta (Chum salmon).